The primary structure comprises 22 residues: Chitin-binding protein 3 (22 aa).

In terms of processing, glycosylated; contains 2.5% carbohydrates.

In terms of biological role, chitin-binding protein. Has antifungal activity against F.solani, F.oxysporum, C.musae and C.gloesporoides but not against P.oligandrum. Depending on concentration the antifungal activity can be fungistatic or fungicidal. Inhibits both spore germination and mycelial growth in F.solani at a concentration of 0.1 mg/ml. Has antifungal activity against C.krusei, C.albicans, C.tropicalis and C.parapsilosis. Has no chitinase, beta-glucanase or hemagglutinating activity. Acts as a flocculent. This chain is Chitin-binding protein 3, found in Moringa oleifera (Horseradish tree).